The chain runs to 380 residues: Succinate--CoA ligase [ADP-forming] subunit beta 2 (380 aa).

In terms of domain architecture, ATP-grasp spans Lys9 to Ile235. Residues Lys45, Gly52–Gly54, Glu91, Ile94, and Glu99 contribute to the ATP site. Residues Asn191 and Asp204 each coordinate Mg(2+). Substrate-binding positions include Asn255 and Gly312–Thr314.

The protein belongs to the succinate/malate CoA ligase beta subunit family. Heterotetramer of two alpha and two beta subunits. Mg(2+) is required as a cofactor.

It catalyses the reaction succinate + ATP + CoA = succinyl-CoA + ADP + phosphate. The enzyme catalyses GTP + succinate + CoA = succinyl-CoA + GDP + phosphate. Its pathway is carbohydrate metabolism; tricarboxylic acid cycle; succinate from succinyl-CoA (ligase route): step 1/1. Its function is as follows. Succinyl-CoA synthetase functions in the citric acid cycle (TCA), coupling the hydrolysis of succinyl-CoA to the synthesis of either ATP or GTP and thus represents the only step of substrate-level phosphorylation in the TCA. The beta subunit provides nucleotide specificity of the enzyme and binds the substrate succinate, while the binding sites for coenzyme A and phosphate are found in the alpha subunit. This chain is Succinate--CoA ligase [ADP-forming] subunit beta 2, found in Archaeoglobus fulgidus (strain ATCC 49558 / DSM 4304 / JCM 9628 / NBRC 100126 / VC-16).